We begin with the raw amino-acid sequence, 1218 residues long: Chitin synthase 4 (1218 aa).

Disordered stretches follow at residues Met-1–Asn-93 and Thr-132–Lys-190. Over residues Thr-14–Glu-34 the composition is skewed to basic and acidic residues. Residue Asn-50 is glycosylated (N-linked (GlcNAc...) asparagine). Polar residues-rich tracts occupy residues Ser-71 to Asp-80 and Val-133 to Thr-142. The segment covering Arg-175–Lys-190 has biased composition (basic and acidic residues). N-linked (GlcNAc...) asparagine glycosylation occurs at Asn-180. 2 consecutive transmembrane segments (helical) span residues Ile-200–Phe-220 and Val-235–Phe-255. 3 N-linked (GlcNAc...) asparagine glycosylation sites follow: Asn-365, Asn-404, and Asn-426. A helical membrane pass occupies residues Val-487–Ala-507. Disordered regions lie at residues Pro-548–Met-570 and Tyr-582–Leu-606. Residues Pro-553 to Gly-562 are compositionally biased toward polar residues. Asn-617, Asn-903, and Asn-1030 each carry an N-linked (GlcNAc...) asparagine glycan. 3 consecutive transmembrane segments (helical) span residues Ile-1062–Ile-1082, Val-1087–Val-1107, and Tyr-1115–Ala-1135. The segment at Gln-1188–Tyr-1218 is disordered. A compositionally biased stretch (polar residues) spans Ala-1189–Pro-1198. N-linked (GlcNAc...) asparagine glycosylation is present at Asn-1190.

The protein belongs to the chitin synthase family. Class IV subfamily. Maximal activity requires trypsin activation, suggesting a zymogenic nature.

It is found in the cell membrane. It catalyses the reaction [(1-&gt;4)-N-acetyl-beta-D-glucosaminyl](n) + UDP-N-acetyl-alpha-D-glucosamine = [(1-&gt;4)-N-acetyl-beta-D-glucosaminyl](n+1) + UDP + H(+). Activity is stimulated by Mg(2+), and is more inhibited by polyoxin D than by nikkomycin. Its function is as follows. Polymerizes chitin, a structural polymer of the cell wall and septum, by transferring the sugar moiety of UDP-GlcNAc to the non-reducing end of the growing chitin polymer. CHS4 synthesizes a large amount of chitin and appears to play a role in the process of cell separation. CHS4 is particularly well suited for functioning at the higher temperatures associated with its poorly characterized saprophic environment and with human infection. This is Chitin synthase 4 from Exophiala dermatitidis (strain ATCC 34100 / CBS 525.76 / NIH/UT8656) (Black yeast).